The primary structure comprises 373 residues: MRVIIAGGGTGGHIYPALAIAEGIKRRHPDADLLYVGTSRGLETEIVPRTGLPFHAIPAAGLKRGLSPTNLAAVLRAGRGLGASLSLMRRFRPQVVVGTGGYVCGPVVLAAALRGIKTLIHEQNALPGLTNRMLSRYASRTAVTFVEAAGHFPARARIILTGLPVRPEILNTRREQARRHLGIPDHAFVLLSFGGSRGARSLNQAMIPVVQAFREHPGVRLFHATGTAGYDEFAPLLKGTGSTAKAPGNIVVAPYFHEIAALLGAADLVICRSGASTIAELTALGLPSILVPYPFATGNHQEYNARALSERGAAVLILDRELTGQGLLAAVAALWNDPRKLAAMRQASKALGKPRALDSILDIIEKLAGKGTR.

UDP-N-acetyl-alpha-D-glucosamine-binding positions include 10-12 (TGG), Asn124, Arg166, Ser196, and Gln301.

Belongs to the glycosyltransferase 28 family. MurG subfamily.

It is found in the cell membrane. It catalyses the reaction di-trans,octa-cis-undecaprenyl diphospho-N-acetyl-alpha-D-muramoyl-L-alanyl-D-glutamyl-meso-2,6-diaminopimeloyl-D-alanyl-D-alanine + UDP-N-acetyl-alpha-D-glucosamine = di-trans,octa-cis-undecaprenyl diphospho-[N-acetyl-alpha-D-glucosaminyl-(1-&gt;4)]-N-acetyl-alpha-D-muramoyl-L-alanyl-D-glutamyl-meso-2,6-diaminopimeloyl-D-alanyl-D-alanine + UDP + H(+). Its pathway is cell wall biogenesis; peptidoglycan biosynthesis. Functionally, cell wall formation. Catalyzes the transfer of a GlcNAc subunit on undecaprenyl-pyrophosphoryl-MurNAc-pentapeptide (lipid intermediate I) to form undecaprenyl-pyrophosphoryl-MurNAc-(pentapeptide)GlcNAc (lipid intermediate II). The polypeptide is UDP-N-acetylglucosamine--N-acetylmuramyl-(pentapeptide) pyrophosphoryl-undecaprenol N-acetylglucosamine transferase (Desulforudis audaxviator (strain MP104C)).